Consider the following 429-residue polypeptide: [LysW]-aminoadipate semialdehyde transaminase (429 aa).

Pyridoxal 5'-phosphate contacts are provided by residues G112–T113 and F139. R142 contacts substrate. Pyridoxal 5'-phosphate is bound at residue D226–Q229. At K255 the chain carries N6-(pyridoxal phosphate)lysine. T283 contributes to the substrate binding site. Pyridoxal 5'-phosphate is bound at residue T284. Residues L408–E429 form a disordered region. A compositionally biased stretch (low complexity) spans Q411 to E429.

Belongs to the class-III pyridoxal-phosphate-dependent aminotransferase family. LysJ subfamily. As to quaternary structure, homodimer. Pyridoxal 5'-phosphate serves as cofactor.

It is found in the cytoplasm. The enzyme catalyses [amino-group carrier protein]-C-terminal-gamma-(L-lysyl)-L-glutamate + 2-oxoglutarate = [amino-group carrier protein]-C-terminal-N-(1-carboxy-5-oxopentan-1-yl)-L-glutamine + L-glutamate. The protein operates within amino-acid biosynthesis; L-lysine biosynthesis via AAA pathway; L-lysine from L-alpha-aminoadipate (Thermus route): step 4/5. Its function is as follows. Catalyzes the transfer of the amino group of L-glutamate to [LysW]-aminoadipate 6-semialdehyde, generating [LysW]-gamma-L-lysine. This chain is [LysW]-aminoadipate semialdehyde transaminase, found in Deinococcus radiodurans (strain ATCC 13939 / DSM 20539 / JCM 16871 / CCUG 27074 / LMG 4051 / NBRC 15346 / NCIMB 9279 / VKM B-1422 / R1).